Here is a 1111-residue protein sequence, read N- to C-terminus: Histone deacetylase 5 (1111 aa).

Residue Lys-35 forms a Glycyl lysine isopeptide (Lys-Gly) (interchain with G-Cter in SUMO2) linkage. Disordered regions lie at residues 40 to 63 (GAMPSSMGGGGGGSPSPVELRGAL), 107 to 136 (RQHEVQLQKHLKQQQEMLAAKRQQELEQQR), and 187 to 272 (KEPT…SSPL). The segment covering 238–249 (DSRDDFPLRKTA) has biased composition (basic and acidic residues). Ser-250 carries the phosphoserine; by AMPK, CaMK1, SIK1 and PKD/PRKD1 modification. Residues 263 to 272 (KVAERRSSPL) are compositionally biased toward basic and acidic residues. Phosphothreonine; by PKC is present on Thr-283. The tract at residues 474–495 (TVGKLPRHRPLSRTQSSPLPQS) is disordered. Over residues 485–495 (SRTQSSPLPQS) the composition is skewed to low complexity. At Ser-489 the chain carries Phosphoserine; by AMPK, CaMK1, SIK1 and PKD/PRKD1. Lys-524 carries the post-translational modification N6-acetyllysine. Disordered regions lie at residues 527 to 611 (TKTG…LEES) and 645 to 666 (LGRTQSSPAAPGSMKSPPDQPT). Positions 572-610 (STQEDLEEEEDEEEEDEDCIQVKDEEGESGPDEGPDLEE) are enriched in acidic residues. 2 positions are modified to phosphoserine: Ser-600 and Ser-650. Positions 671-1017 (TTGVVYDTFM…VSALLSVELQ (347 aa)) are histone deacetylase. Zn(2+)-binding residues include Cys-685, Cys-687, His-693, and Cys-770. The active site involves His-822. Positions 1070–1109 (EEAETVSAMALLSVGAEQAQAVATQEHSPRPAEEPMEQEP) match the Nuclear export signal motif. Residues 1086–1111 (EQAQAVATQEHSPRPAEEPMEQEPTL) form a disordered region. Ser-1097 carries the phosphoserine modification.

This sequence belongs to the histone deacetylase family. HD type 2 subfamily. As to quaternary structure, interacts with AHRR, BAHD1, BCOR, HDAC7, HDAC9, CTBP1, MEF2C, NCOR2, NRIP1, PHB2 and a 14-3-3 chaperone protein. Interacts with BCL6, DDIT3/CHOP, GRK5, KDM5B and MYOCD. Interacts with EP300 in the presence of TFAP2C. Interacts with ANKRA2. Interacts with CUL7 (as part of the 3M complex); negatively regulated by ANKRA2. Interacts with ZBTB7B; the interaction allows the recruitment of HDAC4 on CD8 loci for deacetylation and possible inhibition of CD8 genes expression. Interacts with RARA. In terms of processing, phosphorylated by AMPK, CaMK1, SIK1 and PRKD1 at Ser-250 and Ser-489. The phosphorylation is required for the export to the cytoplasm and inhibition. Phosphorylated by the PKC kinases PKN1 and PKN2, impairing nuclear import. Phosphorylated by GRK5, leading to nuclear export of HDAC5 and allowing MEF2-mediated transcription. Ubiquitinated. Polyubiquitination however does not lead to its degradation.

The protein resides in the nucleus. It is found in the cytoplasm. The enzyme catalyses N(6)-acetyl-L-lysyl-[histone] + H2O = L-lysyl-[histone] + acetate. Responsible for the deacetylation of lysine residues on the N-terminal part of the core histones (H2A, H2B, H3 and H4). Histone deacetylation gives a tag for epigenetic repression and plays an important role in transcriptional regulation, cell cycle progression and developmental events. Histone deacetylases act via the formation of large multiprotein complexes. Involved in muscle maturation by repressing transcription of myocyte enhancer MEF2C. During muscle differentiation, it shuttles into the cytoplasm, allowing the expression of myocyte enhancer factors. Serves as a corepressor of RARA and causes its deacetylation. In association with RARA, plays a role in the repression of microRNA-10a and thereby in the inflammatory response. The polypeptide is Histone deacetylase 5 (HDAC5) (Cricetulus griseus (Chinese hamster)).